A 357-amino-acid chain; its full sequence is Probable butyrate kinase 1 (357 aa).

It belongs to the acetokinase family.

The protein resides in the cytoplasm. The catalysed reaction is butanoate + ATP = butanoyl phosphate + ADP. The chain is Probable butyrate kinase 1 from Caldanaerobacter subterraneus subsp. tengcongensis (strain DSM 15242 / JCM 11007 / NBRC 100824 / MB4) (Thermoanaerobacter tengcongensis).